Consider the following 58-residue polypeptide: Large ribosomal subunit protein bL32 (58 aa).

This sequence belongs to the bacterial ribosomal protein bL32 family.

The polypeptide is Large ribosomal subunit protein bL32 (Limosilactobacillus fermentum (strain NBRC 3956 / LMG 18251) (Lactobacillus fermentum)).